The sequence spans 628 residues: Phomenoic acid biosynthesis cluster MFS-type transporter (628 aa).

Helical transmembrane passes span 102–122 (IHGF…FLYA), 150–170 (VGFV…YGIL), 174–194 (WLYI…GAAP), 204–224 (VFAG…LSIN), 232–252 (AYLS…PVIG), 262–282 (WAFY…FFLL), 302–322 (FVGA…INFG), 329–349 (NSGT…AFAV), 375–395 (MLLF…IYFI), 407–427 (ALDS…TILV), 435–455 (FGYY…ANVF), 488–508 (GFEA…YAVI), 524–544 (IMIA…AVFI), and 595–615 (AKAF…SLGF).

This sequence belongs to the major facilitator superfamily. TCR/Tet family.

The protein resides in the cell membrane. Its function is as follows. MFS-type transporter; part of the gene cluster that mediates the biosynthesis of phomenoic acid, a long chain aliphatic carboxylic acid that does not appear to be essential for pathogenicity but may play a role in allowing to outcompete other fungi in the environmental niche via its antifungal properties. Is probably involved in the efflux of phomenoic acid. The polypeptide is Phomenoic acid biosynthesis cluster MFS-type transporter (Leptosphaeria maculans (strain JN3 / isolate v23.1.3 / race Av1-4-5-6-7-8) (Blackleg fungus)).